A 491-amino-acid chain; its full sequence is uncharacterized protein (491 aa).

Position 99 (tryptophan 99) interacts with substrate. Asparagine 137 is a Ca(2+) binding site. Substrate is bound at residue histidine 138. Positions 177 and 190 each coordinate Ca(2+). Arginine 219 lines the substrate pocket. The Ca(2+) site is built by aspartate 221, histidine 225, and glutamate 245. Aspartate 221 (nucleophile) is an active-site residue. A substrate-binding site is contributed by 224–225 (KH). Glutamate 245 (proton donor) is an active-site residue. Residues glycine 249, histidine 312, and arginine 360 each contribute to the substrate site.

The protein belongs to the glycosyl hydrolase 13 family. Ca(2+) is required as a cofactor.

It localises to the cytoplasm. Its subcellular location is the nucleus. This is an uncharacterized protein from Schizosaccharomyces pombe (strain 972 / ATCC 24843) (Fission yeast).